Here is a 290-residue protein sequence, read N- to C-terminus: ATP synthase gamma chain (290 aa).

This sequence belongs to the ATPase gamma chain family. F-type ATPases have 2 components, CF(1) - the catalytic core - and CF(0) - the membrane proton channel. CF(1) has five subunits: alpha(3), beta(3), gamma(1), delta(1), epsilon(1). CF(0) has three main subunits: a, b and c.

The protein localises to the cell inner membrane. Functionally, produces ATP from ADP in the presence of a proton gradient across the membrane. The gamma chain is believed to be important in regulating ATPase activity and the flow of protons through the CF(0) complex. The polypeptide is ATP synthase gamma chain (Thiobacillus denitrificans (strain ATCC 25259 / T1)).